A 151-amino-acid polypeptide reads, in one-letter code: Lipoprotein signal peptidase (151 aa).

2 helical membrane-spanning segments follow: residues 54–74 (GQMW…IYLI) and 83–103 (LLKI…IDRL). Active-site residues include D110 and D125. Residues 120–140 (IFNIADSALTIGVGLFLLNIL) form a helical membrane-spanning segment.

The protein belongs to the peptidase A8 family.

The protein localises to the cell membrane. It carries out the reaction Release of signal peptides from bacterial membrane prolipoproteins. Hydrolyzes -Xaa-Yaa-Zaa-|-(S,diacylglyceryl)Cys-, in which Xaa is hydrophobic (preferably Leu), and Yaa (Ala or Ser) and Zaa (Gly or Ala) have small, neutral side chains.. The protein operates within protein modification; lipoprotein biosynthesis (signal peptide cleavage). Functionally, this protein specifically catalyzes the removal of signal peptides from prolipoproteins. This Shouchella clausii (strain KSM-K16) (Alkalihalobacillus clausii) protein is Lipoprotein signal peptidase.